A 308-amino-acid chain; its full sequence is Cysteine synthase (308 aa).

At K45 the chain carries N6-(pyridoxal phosphate)lysine. Residues N75, 179–183 (GTGGT), and S267 each bind pyridoxal 5'-phosphate.

Belongs to the cysteine synthase/cystathionine beta-synthase family. As to quaternary structure, homodimer. Forms CymR(2):CysK(2) or CymR(4):CysK(4) complexes in the absence of O-acetylserine. The cofactor is pyridoxal 5'-phosphate.

It catalyses the reaction O-acetyl-L-serine + hydrogen sulfide = L-cysteine + acetate. It participates in amino-acid biosynthesis; L-cysteine biosynthesis; L-cysteine from L-serine: step 2/2. In terms of biological role, catalyzes the conversion of O-acetylserine to cysteine. Also acts as a sensor of cysteine availability in the signal transduction pathway modulating CymR activity. When cysteine is present, the pool of O-acetylserine (OAS) is low, which leads to the formation of a CymR-CysK complex and transcriptional repression of the CymR regulon occurs. In the absence of cysteine, the OAS pool is high and the CymR-CysK complex is mostly dissociated, leading to a faster dissociation of CymR from its DNA targets and the lifting of CymR-dependent repression. This chain is Cysteine synthase (cysK), found in Bacillus subtilis (strain 168).